The following is a 738-amino-acid chain: Translation initiation factor IF-2 (738 aa).

A compositionally biased stretch (polar residues) spans M1 to Q10. Residues M1–P150 are disordered. The segment covering A22–G102 has biased composition (gly residues). Residues G103–I120 are compositionally biased toward basic and acidic residues. Positions N121 to T143 are enriched in low complexity. In terms of domain architecture, tr-type G spans P238–E405. Residues G247–T254 are G1. Residue G247–T254 coordinates GTP. The segment at G272 to H276 is G2. Residues D293 to G296 are G3. GTP is bound by residues D293 to H297 and N347 to D350. The G4 stretch occupies residues N347 to D350. The tract at residues S383–K385 is G5.

It belongs to the TRAFAC class translation factor GTPase superfamily. Classic translation factor GTPase family. IF-2 subfamily.

It localises to the cytoplasm. Its function is as follows. One of the essential components for the initiation of protein synthesis. Protects formylmethionyl-tRNA from spontaneous hydrolysis and promotes its binding to the 30S ribosomal subunits. Also involved in the hydrolysis of GTP during the formation of the 70S ribosomal complex. The polypeptide is Translation initiation factor IF-2 (Roseiflexus castenholzii (strain DSM 13941 / HLO8)).